The chain runs to 647 residues: 1-deoxy-D-xylulose-5-phosphate synthase (647 aa).

Thiamine diphosphate is bound by residues His-79 and 120-122; that span reads GHA. Asp-152 is a Mg(2+) binding site. Thiamine diphosphate-binding positions include 153 to 154, Asn-181, Phe-293, and Glu-377; that span reads GS. Asn-181 contacts Mg(2+).

This sequence belongs to the transketolase family. DXPS subfamily. Homodimer. The cofactor is Mg(2+). Thiamine diphosphate serves as cofactor.

The enzyme catalyses D-glyceraldehyde 3-phosphate + pyruvate + H(+) = 1-deoxy-D-xylulose 5-phosphate + CO2. Its pathway is metabolic intermediate biosynthesis; 1-deoxy-D-xylulose 5-phosphate biosynthesis; 1-deoxy-D-xylulose 5-phosphate from D-glyceraldehyde 3-phosphate and pyruvate: step 1/1. Functionally, catalyzes the acyloin condensation reaction between C atoms 2 and 3 of pyruvate and glyceraldehyde 3-phosphate to yield 1-deoxy-D-xylulose-5-phosphate (DXP). This is 1-deoxy-D-xylulose-5-phosphate synthase from Bacteroides thetaiotaomicron (strain ATCC 29148 / DSM 2079 / JCM 5827 / CCUG 10774 / NCTC 10582 / VPI-5482 / E50).